The following is a 90-amino-acid chain: MAKGQSLQDPFLNALRRERVPVSIYLVNGIKLQGQVESFDQFVILLKNTVSQMVYKHAISTVVPARPFNVTGHQNAQGGYGAQDDAPSGE.

The 60-residue stretch at 9–68 (DPFLNALRRERVPVSIYLVNGIKLQGQVESFDQFVILLKNTVSQMVYKHAISTVVPARPF) folds into the Sm domain.

Belongs to the Hfq family. As to quaternary structure, homohexamer.

In terms of biological role, RNA chaperone that binds small regulatory RNA (sRNAs) and mRNAs to facilitate mRNA translational regulation in response to envelope stress, environmental stress and changes in metabolite concentrations. Also binds with high specificity to tRNAs. The sequence is that of RNA-binding protein Hfq from Shewanella baltica (strain OS155 / ATCC BAA-1091).